Here is a 637-residue protein sequence, read N- to C-terminus: Early transcription factor 70 kDa subunit (637 aa).

Residues 32 to 185 (RTIIDENRSV…GHIIDLMSEE (154 aa)) enclose the Helicase ATP-binding domain. 45–52 (HIMGSGKT) is an ATP binding site. The DEXH box signature appears at 135-138 (DEAH). Residues 327 to 507 (KFKYFINRIQ…VLPFDIKKLL (181 aa)) form the Helicase C-terminal domain.

It belongs to the helicase family. VETF subfamily. In terms of assembly, heterodimer of a 70 kDa and a 82 kDa subunit. Part of the early transcription complex composed of ETF, RAP94/OPG109, and the DNA-directed RNA polymerase.

It is found in the virion. Its function is as follows. Acts with RNA polymerase to initiate transcription from early gene promoters. Is recruited by the RPO-associated protein of 94 kDa RAP94/OPG109 to form the early transcription complex, which also contains the core RNA polymerase. ETF heterodimer binds to early gene promoters. This is Early transcription factor 70 kDa subunit (OPG118) from Homo sapiens (Human).